A 163-amino-acid polypeptide reads, in one-letter code: Lipoprotein signal peptidase (163 aa).

The next 3 membrane-spanning stretches (helical) occupy residues 4–24 (SAAL…LLIL), 66–86 (LDAW…AWLW), and 92–112 (DHQF…GNII). Active-site residues include aspartate 122 and aspartate 140. The chain crosses the membrane as a helical span at residues 132-152 (SFAVFNLADSLITIGAGFILL).

This sequence belongs to the peptidase A8 family.

It is found in the cell inner membrane. It catalyses the reaction Release of signal peptides from bacterial membrane prolipoproteins. Hydrolyzes -Xaa-Yaa-Zaa-|-(S,diacylglyceryl)Cys-, in which Xaa is hydrophobic (preferably Leu), and Yaa (Ala or Ser) and Zaa (Gly or Ala) have small, neutral side chains.. The protein operates within protein modification; lipoprotein biosynthesis (signal peptide cleavage). Its function is as follows. This protein specifically catalyzes the removal of signal peptides from prolipoproteins. The chain is Lipoprotein signal peptidase from Allorhizobium ampelinum (strain ATCC BAA-846 / DSM 112012 / S4) (Agrobacterium vitis (strain S4)).